The sequence spans 482 residues: Glutamate--tRNA ligase (482 aa).

A 'HIGH' region motif is present at residues 9–19; sequence PSPTGYLHIGG. Residues 252–256 carry the 'KMSKS' region motif; the sequence is KLSKR. Position 255 (K255) interacts with ATP.

Belongs to the class-I aminoacyl-tRNA synthetase family. Glutamate--tRNA ligase type 1 subfamily. As to quaternary structure, monomer.

It is found in the cytoplasm. It catalyses the reaction tRNA(Glu) + L-glutamate + ATP = L-glutamyl-tRNA(Glu) + AMP + diphosphate. In terms of biological role, catalyzes the attachment of glutamate to tRNA(Glu) in a two-step reaction: glutamate is first activated by ATP to form Glu-AMP and then transferred to the acceptor end of tRNA(Glu). In Ureaplasma urealyticum serovar 10 (strain ATCC 33699 / Western), this protein is Glutamate--tRNA ligase.